Here is an 82-residue protein sequence, read N- to C-terminus: RNA-binding protein Hfq (82 aa).

The Sm domain occupies 11-71 (DTFLNSVRKS…ISTIMPAQPV (61 aa)).

Belongs to the Hfq family. As to quaternary structure, homohexamer.

Functionally, RNA chaperone that binds small regulatory RNA (sRNAs) and mRNAs to facilitate mRNA translational regulation in response to envelope stress, environmental stress and changes in metabolite concentrations. Also binds with high specificity to tRNAs. The sequence is that of RNA-binding protein Hfq from Caulobacter sp. (strain K31).